A 72-amino-acid polypeptide reads, in one-letter code: Large ribosomal subunit protein uL29 (72 aa).

Belongs to the universal ribosomal protein uL29 family.

The polypeptide is Large ribosomal subunit protein uL29 (Caldicellulosiruptor saccharolyticus (strain ATCC 43494 / DSM 8903 / Tp8T 6331)).